Here is a 630-residue protein sequence, read N- to C-terminus: Cytochrome B pre-mRNA-processing protein 2 (630 aa).

The protein localises to the mitochondrion. Its function is as follows. Appears to be specifically required for the splicing of the terminal intron (bI5) of the cytochrome b pre-mRNA. Can also stimulates the splicing of the omega intron of the precursor of large ribosomal RNA. This Saccharomyces paradoxus (Yeast) protein is Cytochrome B pre-mRNA-processing protein 2 (CBP2).